Reading from the N-terminus, the 388-residue chain is Putative F-box protein At3g17490 (388 aa).

The region spanning 1–46 (MMMPHLSEDLVEEILSRVPAISLKRLRYTCKQWNALFNDQRFSKKH) is the F-box domain.

The protein is Putative F-box protein At3g17490 of Arabidopsis thaliana (Mouse-ear cress).